The chain runs to 1216 residues: DNA-directed RNA polymerase subunit beta' (1216 aa).

The Zn(2+) site is built by Cys-60, Cys-62, Cys-75, and Cys-78. 3 residues coordinate Mg(2+): Asp-450, Asp-452, and Asp-454. Residues Cys-819, Cys-893, Cys-900, and Cys-903 each coordinate Zn(2+).

Belongs to the RNA polymerase beta' chain family. In terms of assembly, the RNAP catalytic core consists of 2 alpha, 1 beta, 1 beta' and 1 omega subunit. When a sigma factor is associated with the core the holoenzyme is formed, which can initiate transcription. Requires Mg(2+) as cofactor. Zn(2+) serves as cofactor.

The catalysed reaction is RNA(n) + a ribonucleoside 5'-triphosphate = RNA(n+1) + diphosphate. Its function is as follows. DNA-dependent RNA polymerase catalyzes the transcription of DNA into RNA using the four ribonucleoside triphosphates as substrates. In Streptococcus agalactiae serotype Ia (strain ATCC 27591 / A909 / CDC SS700), this protein is DNA-directed RNA polymerase subunit beta'.